The following is a 426-amino-acid chain: 4-hydroxy-3-methylbut-2-en-1-yl diphosphate synthase (flavodoxin) (426 aa).

Residues 1–20 are disordered; the sequence is MLDRDLTLSDDAYESSPVSR. Residues Cys-320, Cys-323, Cys-366, and Glu-373 each coordinate [4Fe-4S] cluster.

This sequence belongs to the IspG family. It depends on [4Fe-4S] cluster as a cofactor.

It carries out the reaction (2E)-4-hydroxy-3-methylbut-2-enyl diphosphate + oxidized [flavodoxin] + H2O + 2 H(+) = 2-C-methyl-D-erythritol 2,4-cyclic diphosphate + reduced [flavodoxin]. The protein operates within isoprenoid biosynthesis; isopentenyl diphosphate biosynthesis via DXP pathway; isopentenyl diphosphate from 1-deoxy-D-xylulose 5-phosphate: step 5/6. Converts 2C-methyl-D-erythritol 2,4-cyclodiphosphate (ME-2,4cPP) into 1-hydroxy-2-methyl-2-(E)-butenyl 4-diphosphate. This is 4-hydroxy-3-methylbut-2-en-1-yl diphosphate synthase (flavodoxin) from Wolbachia pipientis subsp. Culex pipiens (strain wPip).